A 158-amino-acid chain; its full sequence is S-ribosylhomocysteine lyase (158 aa).

Positions 56, 60, and 125 each coordinate Fe cation.

This sequence belongs to the LuxS family. Homodimer. Fe cation is required as a cofactor.

The enzyme catalyses S-(5-deoxy-D-ribos-5-yl)-L-homocysteine = (S)-4,5-dihydroxypentane-2,3-dione + L-homocysteine. Involved in the synthesis of autoinducer 2 (AI-2) which is secreted by bacteria and is used to communicate both the cell density and the metabolic potential of the environment. The regulation of gene expression in response to changes in cell density is called quorum sensing. Catalyzes the transformation of S-ribosylhomocysteine (RHC) to homocysteine (HC) and 4,5-dihydroxy-2,3-pentadione (DPD). The chain is S-ribosylhomocysteine lyase from Leuconostoc mesenteroides subsp. mesenteroides (strain ATCC 8293 / DSM 20343 / BCRC 11652 / CCM 1803 / JCM 6124 / NCDO 523 / NBRC 100496 / NCIMB 8023 / NCTC 12954 / NRRL B-1118 / 37Y).